Reading from the N-terminus, the 92-residue chain is Small ribosomal subunit protein bS20 (92 aa).

A disordered region spans residues 1 to 25 (MANSAQARKRARQAAKANSHNSALR).

It belongs to the bacterial ribosomal protein bS20 family.

Binds directly to 16S ribosomal RNA. The protein is Small ribosomal subunit protein bS20 of Burkholderia mallei (strain NCTC 10247).